A 257-amino-acid chain; its full sequence is Imidazole glycerol phosphate synthase subunit HisF (257 aa).

Catalysis depends on residues D12 and D131.

Belongs to the HisA/HisF family. In terms of assembly, heterodimer of HisH and HisF.

The protein resides in the cytoplasm. It carries out the reaction 5-[(5-phospho-1-deoxy-D-ribulos-1-ylimino)methylamino]-1-(5-phospho-beta-D-ribosyl)imidazole-4-carboxamide + L-glutamine = D-erythro-1-(imidazol-4-yl)glycerol 3-phosphate + 5-amino-1-(5-phospho-beta-D-ribosyl)imidazole-4-carboxamide + L-glutamate + H(+). The protein operates within amino-acid biosynthesis; L-histidine biosynthesis; L-histidine from 5-phospho-alpha-D-ribose 1-diphosphate: step 5/9. Its function is as follows. IGPS catalyzes the conversion of PRFAR and glutamine to IGP, AICAR and glutamate. The HisF subunit catalyzes the cyclization activity that produces IGP and AICAR from PRFAR using the ammonia provided by the HisH subunit. The polypeptide is Imidazole glycerol phosphate synthase subunit HisF (Paraburkholderia phymatum (strain DSM 17167 / CIP 108236 / LMG 21445 / STM815) (Burkholderia phymatum)).